The primary structure comprises 232 residues: Ureidoacrylate amidohydrolase RutB (232 aa).

Asp26 functions as the Proton acceptor in the catalytic mechanism. Residue Lys135 is part of the active site. Cys168 functions as the Nucleophile in the catalytic mechanism.

It belongs to the isochorismatase family. RutB subfamily.

It catalyses the reaction (Z)-3-ureidoacrylate + H2O + H(+) = (Z)-3-aminoacrylate + NH4(+) + CO2. The catalysed reaction is (Z)-3-ureidoacrylate + H2O = (Z)-3-aminoacrylate + carbamate + H(+). It carries out the reaction (Z)-2-methylureidoacrylate + H2O + H(+) = (Z)-2-methylaminoacrylate + NH4(+) + CO2. Functionally, hydrolyzes ureidoacrylate to form aminoacrylate and carbamate. The carbamate hydrolyzes spontaneously, thereby releasing one of the nitrogen atoms of the pyrimidine ring as ammonia and one of its carbon atoms as CO2. The protein is Ureidoacrylate amidohydrolase RutB of Cronobacter turicensis (strain DSM 18703 / CCUG 55852 / LMG 23827 / z3032).